The primary structure comprises 178 residues: UPF0114 protein HPSH_00970 (178 aa).

A run of 4 helical transmembrane segments spans residues 15–35, 54–74, 102–122, and 145–165; these read WLLA…GYVF, LVLS…VLMV, FNAL…IFLL, and PIFW…LAAV.

It belongs to the UPF0114 family.

The protein resides in the cell membrane. This Helicobacter pylori (strain Shi470) protein is UPF0114 protein HPSH_00970.